Reading from the N-terminus, the 430-residue chain is Methylthioribose kinase 1 (430 aa).

ATP contacts are provided by residues 52–56 (DGNLN), Lys-71, and 125–127 (RYI). Asn-56 serves as a coordination point for substrate. Asp-246 lines the substrate pocket. Position 263–265 (263–265 (DPE)) interacts with ATP. Residue Arg-373 participates in substrate binding.

Belongs to the methylthioribose kinase family. Homodimer.

The enzyme catalyses 5-(methylsulfanyl)-D-ribose + ATP = 5-(methylsulfanyl)-alpha-D-ribose 1-phosphate + ADP + H(+). The protein operates within amino-acid biosynthesis; L-methionine biosynthesis via salvage pathway; S-methyl-5-thio-alpha-D-ribose 1-phosphate from S-methyl-5'-thioadenosine (hydrolase route): step 2/2. Functionally, catalyzes the phosphorylation of methylthioribose into methylthioribose-1-phosphate. This chain is Methylthioribose kinase 1, found in Oryza sativa subsp. japonica (Rice).